Here is a 292-residue protein sequence, read N- to C-terminus: Protein SETSIP (292 aa).

Low complexity predominate over residues 1–11; the sequence is MAPKRQSPLPL. 2 disordered regions span residues 1–43 and 158–292; these read MAPK…EQQE and LNES…GEDD. Residues 35–78 adopt a coiled-coil conformation; that stretch reads KKGEKEQQEAIEHIDEVQNEIDRLNEQDSEEILKVEQKYNKLRQ. Acidic residues predominate over residues 237–292; that stretch reads DMDDEEGGEDDDDDDDDGDEGEEELEDIDEGDEDEGEEDEDDDEGEEGEEDEGEDD.

Belongs to the nucleosome assembly protein (NAP) family. As to expression, expressed in endothelial cell (EC) and protein-induced pluripotent stem (PiPS) endothelial cell (EC) (at protein level).

The protein localises to the cytoplasm. The protein resides in the nucleus. Plays a role as a transcriptional activator involved in the early stage of somatic cell reprogramming. Promotes the differentiation of protein-induced pluripotent stem (PiPS) cells into endothelial cells and the formation of vascular-like tubes (in vitro). Involved in the transcription induction of vascular endothelial-cadherin (VE-cadherin) expression. Associates to the VE-cadherin gene promoter. The protein is Protein SETSIP (SETSIP) of Homo sapiens (Human).